A 121-amino-acid chain; its full sequence is Small ribosomal subunit protein uS13 (121 aa).

The disordered stretch occupies residues 91–121 (HRKGLPVRGQRTRTNARTRKGKKKTVAGKKK).

The protein belongs to the universal ribosomal protein uS13 family. Part of the 30S ribosomal subunit. Forms a loose heterodimer with protein S19. Forms two bridges to the 50S subunit in the 70S ribosome.

Located at the top of the head of the 30S subunit, it contacts several helices of the 16S rRNA. In the 70S ribosome it contacts the 23S rRNA (bridge B1a) and protein L5 of the 50S subunit (bridge B1b), connecting the 2 subunits; these bridges are implicated in subunit movement. Contacts the tRNAs in the A and P-sites. This Treponema denticola (strain ATCC 35405 / DSM 14222 / CIP 103919 / JCM 8153 / KCTC 15104) protein is Small ribosomal subunit protein uS13.